The chain runs to 260 residues: Small ribosomal subunit protein uS2 (260 aa).

This sequence belongs to the universal ribosomal protein uS2 family.

This chain is Small ribosomal subunit protein uS2, found in Gluconacetobacter diazotrophicus (strain ATCC 49037 / DSM 5601 / CCUG 37298 / CIP 103539 / LMG 7603 / PAl5).